The sequence spans 119 residues: Large ribosomal subunit protein bL20 (119 aa).

This sequence belongs to the bacterial ribosomal protein bL20 family.

Binds directly to 23S ribosomal RNA and is necessary for the in vitro assembly process of the 50S ribosomal subunit. It is not involved in the protein synthesizing functions of that subunit. This chain is Large ribosomal subunit protein bL20, found in Ruthia magnifica subsp. Calyptogena magnifica.